Reading from the N-terminus, the 1063-residue chain is Retinoblastoma-like protein 1 (1063 aa).

Thr332, Thr369, and Thr385 each carry phosphothreonine. The tract at residues 383–584 (VTTPVASATQ…WEALHASANR (202 aa)) is domain A. The interval 383–944 (VTTPVASATQ…GRVKSFALKY (562 aa)) is pocket; binds T and E1A. A spacer region spans residues 585–779 (VPSCEEVIFP…AQDAHLTGVS (195 aa)). Phosphoserine is present on residues Ser640, Ser650, Ser748, and Ser761. Positions 780–944 (KPKRTGSLAL…GRVKSFALKY (165 aa)) are domain B. Phosphoserine occurs at positions 959, 970, and 983. At Thr992 the chain carries Phosphothreonine. A phosphoserine mark is found at Ser1004 and Ser1036.

The protein belongs to the retinoblastoma protein (RB) family. In terms of assembly, component of the DREAM complex (also named LINC complex) at least composed of E2F4, E2F5, LIN9, LIN37, LIN52, LIN54, MYBL1, MYBL2, RBL1, RBL2, RBBP4, TFDP1 and TFDP2. The complex exists in quiescent cells where it represses cell cycle-dependent genes. It dissociates in S phase when LIN9, LIN37, LIN52 and LIN54 form a subcomplex that binds to MYBL2. Interacts with AATF. Interacts with KDM5A. Interacts with KMT5B and KMT5C. Interacts with USP4. Interacts with RBBP9. Post-translationally, cell-cycle arrest properties are inactivated by phosphorylation on Thr-332, Ser-640, Ser-959 and Ser-970 by CDK4. As to expression, highly expressed in fetal heart and liver. Expressed at low levels in all other fetal tissues except skeletal muscle. High levels in neonatal spleen and thymus with low levels in other tissues. In adult, highly expressed in testis. Barely detectable in other tissues.

The protein resides in the nucleus. Key regulator of entry into cell division. Directly involved in heterochromatin formation by maintaining overall chromatin structure and, in particular, that of constitutive heterochromatin by stabilizing histone methylation. Recruits and targets histone methyltransferases KMT5B and KMT5C, leading to epigenetic transcriptional repression. Controls histone H4 'Lys-20' trimethylation. Probably acts as a transcription repressor by recruiting chromatin-modifying enzymes to promoters. Potent inhibitor of E2F-mediated trans-activation. May act as a tumor suppressor. The protein is Retinoblastoma-like protein 1 (Rbl1) of Mus musculus (Mouse).